We begin with the raw amino-acid sequence, 352 residues long: C-C chemokine receptor type 5 (352 aa).

Residues 1–30 (MDYQVSSPTYDIDYYTSEPCQKINVKQIAA) lie on the Extracellular side of the membrane. At Y3 the chain carries Sulfotyrosine. O-linked (GalNAc...) serine glycans are attached at residues S6 and S7. Y10, Y14, and Y15 each carry sulfotyrosine. 2 disulfides stabilise this stretch: C20-C269 and C101-C178. The helical transmembrane segment at 31–58 (RLLPPLYSLVFIFGFVGNILVVLILINC) threads the bilayer. Topologically, residues 59-68 (KRLKSMTDIY) are cytoplasmic. The chain crosses the membrane as a helical span at residues 69-89 (LLNLAISDLLFLLTVPFWAHY). The Extracellular portion of the chain corresponds to 90-102 (AAAQWDFGNTMCQ). The helical transmembrane segment at 103–124 (LLTGLYFIGFFSGIFFIILLTI) threads the bilayer. Residues 125–141 (DRYLAIVHAVFALKART) are Cytoplasmic-facing. Residues 142–166 (VTFGVVTSVITWVVAVFASLPRIIF) traverse the membrane as a helical segment. At 167 to 198 (TTSHRERLHYTCSSHFPYSQYQFWKNFHTLKI) the chain is on the extracellular side. A helical transmembrane segment spans residues 199–218 (VILGLVLPLLVMVICYSGIL). The Cytoplasmic portion of the chain corresponds to 219–235 (KTLLRCRNEKKRHRAVR). Residues 236 to 260 (LIFTIMIVYFLFWAPYNIVLLLNTF) traverse the membrane as a helical segment. Residues 261-277 (QEFFGLNNCSSSNRLDQ) lie on the Extracellular side of the membrane. The helical transmembrane segment at 278 to 301 (AMQVTETLGMTHCCINPIIYAFVG) threads the bilayer. Residues 302–352 (EKFRNYLLVFFQKHIAKRFCKCCSIFQQEAPERASSVYTRSTGEQEISVGL) are Cytoplasmic-facing. S-palmitoyl cysteine attachment occurs at residues C321, C323, and C324. Residues S336, S337, S342, and S349 each carry the phosphoserine; by BARK1 modification.

The protein belongs to the G-protein coupled receptor 1 family. Interacts with PRAF2. Efficient ligand binding to CCL3/MIP-1alpha and CCL4/MIP-1beta requires sulfation, O-glycosylation and sialic acid modifications. Glycosylation on Ser-6 is required for efficient binding of CCL4. Interacts with GRK2. Interacts with ARRB1 and ARRB2. Interacts with CNIH4. Interacts with S100A4; this interaction stimulates T-lymphocyte chemotaxis. Sulfated on at least 2 of the N-terminal tyrosines. Sulfation is required for efficient binding of the chemokines, CCL3 and CCL4. In terms of processing, palmitoylation in the C-terminal is important for cell surface expression. Post-translationally, phosphorylation on serine residues in the C-terminal is stimulated by binding CC chemokines especially by APO-RANTES. O-glycosylated, but not N-glycosylated. Ser-6 appears to be the major site even if Ser-7 may be also O-glycosylated. Also sialylated glycans present which contribute to chemokine binding. Thr-16 and Ser-17 may also be glycosylated and, if so, with small moieties such as a T-antigen.

The protein localises to the cell membrane. Functionally, receptor for a number of inflammatory CC-chemokines including CCL3/MIP-1-alpha, CCL4/MIP-1-beta and RANTES and subsequently transduces a signal by increasing the intracellular calcium ion level. May play a role in the control of granulocytic lineage proliferation or differentiation. Participates in T-lymphocyte migration to the infection site by acting as a chemotactic receptor. The sequence is that of C-C chemokine receptor type 5 (CCR5) from Cercopithecus ascanius (Black-cheeked white-nosed monkey).